The chain runs to 116 residues: Large ribosomal subunit protein bL17 (116 aa).

The protein belongs to the bacterial ribosomal protein bL17 family. As to quaternary structure, part of the 50S ribosomal subunit. Contacts protein L32.

The polypeptide is Large ribosomal subunit protein bL17 (Cyanothece sp. (strain PCC 7425 / ATCC 29141)).